Here is a 370-residue protein sequence, read N- to C-terminus: Putative F-box protein At1g46984 (370 aa).

An F-box domain is found at 18–64 (YTQLSTLPIDLIIEILSRLPMNSIAICRLVSKQWASILQSSDFTESF).

The protein is Putative F-box protein At1g46984 of Arabidopsis thaliana (Mouse-ear cress).